Here is a 301-residue protein sequence, read N- to C-terminus: Sulfate adenylyltransferase subunit 2 (301 aa).

This sequence belongs to the PAPS reductase family. CysD subfamily. In terms of assembly, heterodimer composed of CysD, the smaller subunit, and CysN.

It catalyses the reaction sulfate + ATP + H(+) = adenosine 5'-phosphosulfate + diphosphate. It participates in sulfur metabolism; hydrogen sulfide biosynthesis; sulfite from sulfate: step 1/3. With CysN forms the ATP sulfurylase (ATPS) that catalyzes the adenylation of sulfate producing adenosine 5'-phosphosulfate (APS) and diphosphate, the first enzymatic step in sulfur assimilation pathway. APS synthesis involves the formation of a high-energy phosphoric-sulfuric acid anhydride bond driven by GTP hydrolysis by CysN coupled to ATP hydrolysis by CysD. This chain is Sulfate adenylyltransferase subunit 2, found in Geobacter metallireducens (strain ATCC 53774 / DSM 7210 / GS-15).